The sequence spans 294 residues: 4-hydroxy-tetrahydrodipicolinate synthase (294 aa).

Thr47 lines the pyruvate pocket. The active-site Proton donor/acceptor is the Tyr135. Lys163 acts as the Schiff-base intermediate with substrate in catalysis. Thr205 serves as a coordination point for pyruvate.

It belongs to the DapA family. In terms of assembly, homotetramer; dimer of dimers.

The protein resides in the cytoplasm. It carries out the reaction L-aspartate 4-semialdehyde + pyruvate = (2S,4S)-4-hydroxy-2,3,4,5-tetrahydrodipicolinate + H2O + H(+). It participates in amino-acid biosynthesis; L-lysine biosynthesis via DAP pathway; (S)-tetrahydrodipicolinate from L-aspartate: step 3/4. Catalyzes the condensation of (S)-aspartate-beta-semialdehyde [(S)-ASA] and pyruvate to 4-hydroxy-tetrahydrodipicolinate (HTPA). This Rickettsia peacockii (strain Rustic) protein is 4-hydroxy-tetrahydrodipicolinate synthase.